The chain runs to 131 residues: Translation initiation factor 5A (131 aa).

Hypusine is present on Lys-37.

It belongs to the eIF-5A family.

It localises to the cytoplasm. Functionally, functions by promoting the formation of the first peptide bond. This is Translation initiation factor 5A (eIF5A) from Methanococcus maripaludis (strain C7 / ATCC BAA-1331).